We begin with the raw amino-acid sequence, 183 residues long: Anterior gradient protein 1 (183 aa).

Residues 1 to 18 (MQAGLSLVCLVLLCSALG) form the signal peptide.

The protein belongs to the AGR family. As to expression, from stage 18 (neurula) onward, expressed in the cement gland until it degenerates. More weakly expressed in the adjacent hatching gland.

It localises to the secreted. In terms of biological role, does not appear to be required for cement gland formation. The protein is Anterior gradient protein 1 (ag1) of Xenopus laevis (African clawed frog).